The chain runs to 131 residues: uncharacterized protein (131 aa).

Residues 13 to 32 (TYSPLPEPPPTPALGGQRGP) are disordered.

This is an uncharacterized protein from Homo sapiens (Human).